The chain runs to 501 residues: Probable Xaa-Pro aminopeptidase pepP (501 aa).

The tract at residues 1–25 (MNYHSFLPLRRSSLSHSTTPPSKSR) is disordered. Residues 12 to 25 (SSLSHSTTPPSKSR) are compositionally biased toward polar residues. Mn(2+) is bound by residues D298, D309, E432, and E472.

It belongs to the peptidase M24B family. Mn(2+) serves as cofactor.

It carries out the reaction Release of any N-terminal amino acid, including proline, that is linked to proline, even from a dipeptide or tripeptide.. In terms of biological role, catalyzes the removal of a penultimate prolyl residue from the N-termini of peptides. The sequence is that of Probable Xaa-Pro aminopeptidase pepP (pepP) from Metarhizium acridum (strain CQMa 102).